The chain runs to 203 residues: Small ribosomal subunit protein uS4c (203 aa).

The tract at residues 15 to 42 (LGALPGLTSKRPRAGSDPRNQELSGNKS) is disordered. One can recognise an S4 RNA-binding domain in the interval 89–150 (MRLDNILFRL…DQKSKAMIQN (62 aa)).

It belongs to the universal ribosomal protein uS4 family. In terms of assembly, part of the 30S ribosomal subunit. Contacts protein S5. The interaction surface between S4 and S5 is involved in control of translational fidelity.

The protein resides in the plastid. It is found in the chloroplast. Functionally, one of the primary rRNA binding proteins, it binds directly to 16S rRNA where it nucleates assembly of the body of the 30S subunit. In terms of biological role, with S5 and S12 plays an important role in translational accuracy. In Oenothera elata subsp. hookeri (Hooker's evening primrose), this protein is Small ribosomal subunit protein uS4c (rps4).